Consider the following 600-residue polypeptide: Long-chain-fatty-acid--CoA ligase FadD15 (600 aa).

The protein belongs to the ATP-dependent AMP-binding enzyme family.

It catalyses the reaction a long-chain fatty acid + ATP + CoA = a long-chain fatty acyl-CoA + AMP + diphosphate. The catalysed reaction is dodecanoate + ATP + CoA = dodecanoyl-CoA + AMP + diphosphate. The enzyme catalyses hexadecanoate + ATP + CoA = hexadecanoyl-CoA + AMP + diphosphate. It functions in the pathway lipid metabolism; fatty acid biosynthesis. Functionally, catalyzes the activation of long-chain fatty acids as acyl-coenzyme A (acyl-CoA), which are then transferred to the multifunctional polyketide synthase (PKS) type III for further chain extension. This chain is Long-chain-fatty-acid--CoA ligase FadD15 (fadD15), found in Mycobacterium tuberculosis (strain ATCC 25618 / H37Rv).